Here is a 492-residue protein sequence, read N- to C-terminus: Glutamyl-tRNA(Gln) amidotransferase subunit A (492 aa).

Active-site charge relay system residues include Lys-84 and Ser-159. The active-site Acyl-ester intermediate is Ser-183.

Belongs to the amidase family. GatA subfamily. Heterotrimer of A, B and C subunits.

It carries out the reaction L-glutamyl-tRNA(Gln) + L-glutamine + ATP + H2O = L-glutaminyl-tRNA(Gln) + L-glutamate + ADP + phosphate + H(+). Its function is as follows. Allows the formation of correctly charged Gln-tRNA(Gln) through the transamidation of misacylated Glu-tRNA(Gln) in organisms which lack glutaminyl-tRNA synthetase. The reaction takes place in the presence of glutamine and ATP through an activated gamma-phospho-Glu-tRNA(Gln). This Anaeromyxobacter dehalogenans (strain 2CP-C) protein is Glutamyl-tRNA(Gln) amidotransferase subunit A.